The following is a 224-amino-acid chain: Peroxiredoxin-like 2A (224 aa).

A thioredoxin fold region spans residues 14-112 (MWSVGLGAVG…SKLGVPLYAV (99 aa)). U85 is a non-standard amino acid (selenocysteine). C88 serves as the catalytic Redox-active.

This sequence belongs to the peroxiredoxin-like PRXL2 family. PRXL2A subfamily.

Its subcellular location is the cytoplasm. Its function is as follows. Involved in redox regulation of the cell. Acts as an antioxidant. Inhibits TNFSF11-induced NFKB1 and JUN activation and osteoclast differentiation. May affect bone resorption and help to maintain bone mass. The polypeptide is Peroxiredoxin-like 2A (PRXL2A) (Gallus gallus (Chicken)).